Here is a 403-residue protein sequence, read N- to C-terminus: ATP phosphoribosyltransferase regulatory subunit (403 aa).

It belongs to the class-II aminoacyl-tRNA synthetase family. HisZ subfamily. As to quaternary structure, heteromultimer composed of HisG and HisZ subunits.

It localises to the cytoplasm. It participates in amino-acid biosynthesis; L-histidine biosynthesis; L-histidine from 5-phospho-alpha-D-ribose 1-diphosphate: step 1/9. Its function is as follows. Required for the first step of histidine biosynthesis. May allow the feedback regulation of ATP phosphoribosyltransferase activity by histidine. In Crocosphaera subtropica (strain ATCC 51142 / BH68) (Cyanothece sp. (strain ATCC 51142)), this protein is ATP phosphoribosyltransferase regulatory subunit.